The sequence spans 233 residues: Probable septum site-determining protein MinC (233 aa).

The protein belongs to the MinC family. As to quaternary structure, interacts with MinD and FtsZ.

In terms of biological role, cell division inhibitor that blocks the formation of polar Z ring septums. Rapidly oscillates between the poles of the cell to destabilize FtsZ filaments that have formed before they mature into polar Z rings. Prevents FtsZ polymerization. This is Probable septum site-determining protein MinC from Proteus mirabilis (strain HI4320).